The sequence spans 370 residues: D-alanine--D-alanine ligase (370 aa).

Residues 144–352 (KKIFADAGIP…YGALIERLVD (209 aa)) enclose the ATP-grasp domain. 177–232 (EEVLTYPVFVKPANLGSSVGISKATNKTELIEAMTEAFLYDRRVVVEQGVVAREIE) contributes to the ATP binding site. Residues Asp306, Glu319, and Asn321 each contribute to the Mg(2+) site.

The protein belongs to the D-alanine--D-alanine ligase family. Mg(2+) serves as cofactor. It depends on Mn(2+) as a cofactor.

The protein resides in the cytoplasm. It catalyses the reaction 2 D-alanine + ATP = D-alanyl-D-alanine + ADP + phosphate + H(+). Its pathway is cell wall biogenesis; peptidoglycan biosynthesis. Its function is as follows. Cell wall formation. This chain is D-alanine--D-alanine ligase, found in Listeria innocua serovar 6a (strain ATCC BAA-680 / CLIP 11262).